A 435-amino-acid polypeptide reads, in one-letter code: Elongation factor 1-alpha (435 aa).

In terms of domain architecture, tr-type G spans 4-227; that stretch reads KPHLNLIVIG…YLDQLELPPK (224 aa). Positions 13 to 20 are G1; it reads GHIDHGKS. Position 13-20 (13-20) interacts with GTP; that stretch reads GHIDHGKS. Serine 20 is a Mg(2+) binding site. Positions 69-73 are G2; that stretch reads GVTIN. The tract at residues 90 to 93 is G3; the sequence is DAPG. Residues 90 to 94 and 152 to 155 contribute to the GTP site; these read DAPGH and NKMD. Positions 152–155 are G4; the sequence is NKMD. The G5 stretch occupies residues 193–195; it reads VAP.

This sequence belongs to the TRAFAC class translation factor GTPase superfamily. Classic translation factor GTPase family. EF-Tu/EF-1A subfamily.

The protein resides in the cytoplasm. The catalysed reaction is GTP + H2O = GDP + phosphate + H(+). Its function is as follows. GTP hydrolase that promotes the GTP-dependent binding of aminoacyl-tRNA to the A-site of ribosomes during protein biosynthesis. In Saccharolobus solfataricus (strain ATCC 35092 / DSM 1617 / JCM 11322 / P2) (Sulfolobus solfataricus), this protein is Elongation factor 1-alpha.